A 249-amino-acid chain; its full sequence is 2,3-bisphosphoglycerate-dependent phosphoglycerate mutase (249 aa).

Substrate-binding positions include 8-15 (RHGESQWN), 21-22 (TG), Arg60, 87-90 (ERHY), Lys98, 114-115 (RR), and 183-184 (GN). Catalysis depends on His9, which acts as the Tele-phosphohistidine intermediate. Residue Glu87 is the Proton donor/acceptor of the active site.

Belongs to the phosphoglycerate mutase family. BPG-dependent PGAM subfamily.

It carries out the reaction (2R)-2-phosphoglycerate = (2R)-3-phosphoglycerate. It functions in the pathway carbohydrate degradation; glycolysis; pyruvate from D-glyceraldehyde 3-phosphate: step 3/5. In terms of biological role, catalyzes the interconversion of 2-phosphoglycerate and 3-phosphoglycerate. This chain is 2,3-bisphosphoglycerate-dependent phosphoglycerate mutase, found in Pelodictyon phaeoclathratiforme (strain DSM 5477 / BU-1).